A 130-amino-acid polypeptide reads, in one-letter code: Small ribosomal subunit protein uS9 (130 aa).

It belongs to the universal ribosomal protein uS9 family.

The sequence is that of Small ribosomal subunit protein uS9 from Acidovorax ebreus (strain TPSY) (Diaphorobacter sp. (strain TPSY)).